Here is a 161-residue protein sequence, read N- to C-terminus: Phosphopantetheine adenylyltransferase (161 aa).

T9 provides a ligand contact to substrate. Residues 9-10 and H17 each bind ATP; that span reads TF. Positions 41, 73, and 87 each coordinate substrate. ATP-binding positions include 88-90, E98, and 123-129; these read GMR and WSYVSST.

It belongs to the bacterial CoaD family. As to quaternary structure, homohexamer. Mg(2+) is required as a cofactor.

It is found in the cytoplasm. The catalysed reaction is (R)-4'-phosphopantetheine + ATP + H(+) = 3'-dephospho-CoA + diphosphate. Its pathway is cofactor biosynthesis; coenzyme A biosynthesis; CoA from (R)-pantothenate: step 4/5. Its function is as follows. Reversibly transfers an adenylyl group from ATP to 4'-phosphopantetheine, yielding dephospho-CoA (dPCoA) and pyrophosphate. This Actinobacillus succinogenes (strain ATCC 55618 / DSM 22257 / CCUG 43843 / 130Z) protein is Phosphopantetheine adenylyltransferase.